Here is a 485-residue protein sequence, read N- to C-terminus: NADH-quinone oxidoreductase subunit N (485 aa).

The next 14 membrane-spanning stretches (helical) occupy residues 8-28 (LIAL…MLSI), 35-55 (FLNA…LWFV), 71-91 (GFAM…CTFA), 105-125 (FYLL…ANHL), 127-147 (ALFL…GYAF), 159-179 (YTIL…LVYA), 203-223 (LLAG…LVPF), 235-255 (PAPV…GVVM), 271-291 (VVLG…ALSQ), 297-317 (LLGY…IALQ), 326-346 (VGVY…VVSL), 373-393 (AAVM…LGFI), 408-430 (WWLV…RVAV), and 455-475 (IVVL…QPLI).

The protein belongs to the complex I subunit 2 family. NDH-1 is composed of 13 different subunits. Subunits NuoA, H, J, K, L, M, N constitute the membrane sector of the complex.

It localises to the cell inner membrane. The catalysed reaction is a quinone + NADH + 5 H(+)(in) = a quinol + NAD(+) + 4 H(+)(out). Its function is as follows. NDH-1 shuttles electrons from NADH, via FMN and iron-sulfur (Fe-S) centers, to quinones in the respiratory chain. The immediate electron acceptor for the enzyme in this species is believed to be ubiquinone. Couples the redox reaction to proton translocation (for every two electrons transferred, four hydrogen ions are translocated across the cytoplasmic membrane), and thus conserves the redox energy in a proton gradient. This chain is NADH-quinone oxidoreductase subunit N, found in Salmonella gallinarum (strain 287/91 / NCTC 13346).